The chain runs to 37 residues: Large ribosomal subunit protein bL36c (37 aa).

This sequence belongs to the bacterial ribosomal protein bL36 family.

The protein resides in the plastid. The protein localises to the chloroplast. The sequence is that of Large ribosomal subunit protein bL36c from Adiantum capillus-veneris (Maidenhair fern).